Reading from the N-terminus, the 333-residue chain is Autoinducer 2 import system permease protein LsrD (333 aa).

Helical transmembrane passes span 7 to 27 (YGWE…FGLS), 45 to 65 (ICIG…GIDI), 67 to 87 (FGST…AGVP), 90 to 110 (VAIP…AGLI), 118 to 138 (LVIT…LSGL), 162 to 182 (LFGL…FWLL), 212 to 232 (TLCM…ILLV), 240 to 260 (SDLG…GGAN), 261 to 281 (IYGG…VGYL), and 288 to 308 (IGTP…LVVV).

The protein belongs to the binding-protein-dependent transport system permease family. AraH/RbsC subfamily. In terms of assembly, the complex is composed of two ATP-binding proteins (LsrA), two transmembrane proteins (LsrC and LsrD) and a solute-binding protein (LsrB).

It localises to the cell inner membrane. Functionally, part of the ABC transporter complex LsrABCD involved in autoinducer 2 (AI-2) import. Probably responsible for the translocation of the substrate across the membrane. The chain is Autoinducer 2 import system permease protein LsrD (lsrD) from Yersinia pseudotuberculosis serotype IB (strain PB1/+).